The chain runs to 87 residues: HssA/B-like protein 18 (87 aa).

It belongs to the hssA/B family.

The polypeptide is HssA/B-like protein 18 (hssl18) (Dictyostelium discoideum (Social amoeba)).